The chain runs to 385 residues: Mannitol-1-phosphate 5-dehydrogenase (385 aa).

Residue 3 to 14 coordinates NAD(+); sequence ALQFGAGNIGRG.

This sequence belongs to the mannitol dehydrogenase family.

The catalysed reaction is D-mannitol 1-phosphate + NAD(+) = beta-D-fructose 6-phosphate + NADH + H(+). This chain is Mannitol-1-phosphate 5-dehydrogenase, found in Buchnera aphidicola subsp. Acyrthosiphon pisum (strain 5A).